The primary structure comprises 547 residues: Inositol-tetrakisphosphate 1-kinase 6 (547 aa).

Lysine 263 contacts 1D-myo-inositol 1,3,4-trisphosphate. Positions 317 and 370 each coordinate ATP. Residues 327 to 539 enclose the ATP-grasp domain; sequence LEGLSAEGRP…FWDAIKQSYE (213 aa). Histidine 381 and lysine 415 together coordinate 1D-myo-inositol 1,3,4-trisphosphate. ATP contacts are provided by residues 404 to 415, serine 430, and serine 450; that span reads QEYIDHGSKIFK. Mg(2+)-binding residues include aspartate 497, aspartate 511, and asparagine 513. Residues asparagine 513 and serine 517 each contribute to the 1D-myo-inositol 1,3,4-trisphosphate site.

This sequence belongs to the ITPK1 family. In terms of assembly, monomer. Requires Mg(2+) as cofactor.

The enzyme catalyses 1D-myo-inositol 3,4,5,6-tetrakisphosphate + ATP = 1D-myo-inositol 1,3,4,5,6-pentakisphosphate + ADP + H(+). The catalysed reaction is 1D-myo-inositol 1,3,4-trisphosphate + ATP = 1D-myo-inositol 1,3,4,5-tetrakisphosphate + ADP + H(+). It carries out the reaction 1D-myo-inositol 1,3,4-trisphosphate + ATP = 1D-myo-inositol 1,3,4,6-tetrakisphosphate + ADP + H(+). Its function is as follows. Kinase that can phosphorylate various inositol polyphosphate such as Ins(3,4,5,6)P4 or Ins(1,3,4)P3 and participates in phytic acid biosynthesis in developing seeds. Phytic acid is the primary storage form of phosphorus in cereal grains and other plant seeds. This Oryza sativa subsp. indica (Rice) protein is Inositol-tetrakisphosphate 1-kinase 6.